The following is a 159-amino-acid chain: SsrA-binding protein (159 aa).

Residues 137–159 (DKRETEKQRDWSREKGRLLKERG) are disordered.

It belongs to the SmpB family.

The protein localises to the cytoplasm. Its function is as follows. Required for rescue of stalled ribosomes mediated by trans-translation. Binds to transfer-messenger RNA (tmRNA), required for stable association of tmRNA with ribosomes. tmRNA and SmpB together mimic tRNA shape, replacing the anticodon stem-loop with SmpB. tmRNA is encoded by the ssrA gene; the 2 termini fold to resemble tRNA(Ala) and it encodes a 'tag peptide', a short internal open reading frame. During trans-translation Ala-aminoacylated tmRNA acts like a tRNA, entering the A-site of stalled ribosomes, displacing the stalled mRNA. The ribosome then switches to translate the ORF on the tmRNA; the nascent peptide is terminated with the 'tag peptide' encoded by the tmRNA and targeted for degradation. The ribosome is freed to recommence translation, which seems to be the essential function of trans-translation. This Mesorhizobium japonicum (strain LMG 29417 / CECT 9101 / MAFF 303099) (Mesorhizobium loti (strain MAFF 303099)) protein is SsrA-binding protein.